The chain runs to 322 residues: Serine/threonine-protein phosphatase PP1-2 (322 aa).

Residues Asp-60, His-62, Asp-88, and Asn-120 each contribute to the Mn(2+) site. The Proton donor role is filled by His-121. Mn(2+) is bound by residues His-169 and His-244. The disordered stretch occupies residues 298-322 (RQRVSQSSIKESKSATNSLKKSKNN). Polar residues predominate over residues 301-316 (VSQSSIKESKSATNSL).

The protein belongs to the PPP phosphatase family. PP-1 subfamily. Requires Mn(2+) as cofactor.

The enzyme catalyses O-phospho-L-seryl-[protein] + H2O = L-seryl-[protein] + phosphate. The catalysed reaction is O-phospho-L-threonyl-[protein] + H2O = L-threonyl-[protein] + phosphate. In terms of biological role, essential role in cell cycle control. PP1 is perhaps required for exit from mitosis. In Schizosaccharomyces pombe (strain 972 / ATCC 24843) (Fission yeast), this protein is Serine/threonine-protein phosphatase PP1-2 (sds21).